We begin with the raw amino-acid sequence, 290 residues long: Phosphoribosylaminoimidazole-succinocarboxamide synthase (290 aa).

Belongs to the SAICAR synthetase family.

It catalyses the reaction 5-amino-1-(5-phospho-D-ribosyl)imidazole-4-carboxylate + L-aspartate + ATP = (2S)-2-[5-amino-1-(5-phospho-beta-D-ribosyl)imidazole-4-carboxamido]succinate + ADP + phosphate + 2 H(+). It functions in the pathway purine metabolism; IMP biosynthesis via de novo pathway; 5-amino-1-(5-phospho-D-ribosyl)imidazole-4-carboxamide from 5-amino-1-(5-phospho-D-ribosyl)imidazole-4-carboxylate: step 1/2. This Haemophilus influenzae (strain ATCC 51907 / DSM 11121 / KW20 / Rd) protein is Phosphoribosylaminoimidazole-succinocarboxamide synthase (purC).